We begin with the raw amino-acid sequence, 214 residues long: Thiamine pyrophosphokinase (214 aa).

It belongs to the thiamine pyrophosphokinase family.

It catalyses the reaction thiamine + ATP = thiamine diphosphate + AMP + H(+). Its pathway is cofactor biosynthesis; thiamine diphosphate biosynthesis; thiamine diphosphate from thiamine: step 1/1. Functionally, catalyzes the ATP-dependent phosphorylation of thiamine to thiamine pyrophosphate. Is involved in thiamine salvage. This Bacillus subtilis (strain 168) protein is Thiamine pyrophosphokinase.